Reading from the N-terminus, the 138-residue chain is Large ribosomal subunit protein uL16 (138 aa).

The span at 1–13 shows a compositional bias: basic residues; the sequence is MLQPARRKYRKEQ. A disordered region spans residues 1–20; that stretch reads MLQPARRKYRKEQKGRNTGV.

It belongs to the universal ribosomal protein uL16 family. Part of the 50S ribosomal subunit.

Functionally, binds 23S rRNA and is also seen to make contacts with the A and possibly P site tRNAs. This chain is Large ribosomal subunit protein uL16, found in Verminephrobacter eiseniae (strain EF01-2).